A 226-amino-acid chain; its full sequence is Flagellar L-ring protein (226 aa).

The N-terminal stretch at 1-15 is a signal peptide; the sequence is MRILGLSAALLILGG. The N-palmitoyl cysteine moiety is linked to residue Cys16. Cys16 carries S-diacylglycerol cysteine lipidation.

Belongs to the FlgH family. The basal body constitutes a major portion of the flagellar organelle and consists of four rings (L,P,S, and M) mounted on a central rod.

It is found in the cell outer membrane. Its subcellular location is the bacterial flagellum basal body. Assembles around the rod to form the L-ring and probably protects the motor/basal body from shearing forces during rotation. This chain is Flagellar L-ring protein, found in Alteromonas mediterranea (strain DSM 17117 / CIP 110805 / LMG 28347 / Deep ecotype).